The primary structure comprises 251 residues: Dihydroorotate dehydrogenase B (NAD(+)), electron transfer subunit homolog (251 aa).

The FAD-binding FR-type domain occupies 2–101; it reads LAELNAEVLE…FLPLGKRLFS (100 aa). Residues Cys-217, Cys-222, Cys-225, and Cys-238 each coordinate [2Fe-2S] cluster.

Belongs to the PyrK family. Requires [2Fe-2S] cluster as cofactor. FAD is required as a cofactor.

This chain is Dihydroorotate dehydrogenase B (NAD(+)), electron transfer subunit homolog, found in Aquifex aeolicus (strain VF5).